A 388-amino-acid chain; its full sequence is 1D-myo-inositol 2-acetamido-2-deoxy-alpha-D-glucopyranoside deacetylase (388 aa).

3 residues coordinate Zn(2+): His6, Asp9, and His144. A disordered region spans residues 369–388 (LDQADEGAAHDTSEQSGQRR).

Belongs to the MshB deacetylase family. It depends on Zn(2+) as a cofactor.

It carries out the reaction 1D-myo-inositol 2-acetamido-2-deoxy-alpha-D-glucopyranoside + H2O = 1D-myo-inositol 2-amino-2-deoxy-alpha-D-glucopyranoside + acetate. In terms of biological role, catalyzes the deacetylation of 1D-myo-inositol 2-acetamido-2-deoxy-alpha-D-glucopyranoside (GlcNAc-Ins) in the mycothiol biosynthesis pathway. This chain is 1D-myo-inositol 2-acetamido-2-deoxy-alpha-D-glucopyranoside deacetylase, found in Corynebacterium kroppenstedtii (strain DSM 44385 / JCM 11950 / CIP 105744 / CCUG 35717).